Here is a 228-residue protein sequence, read N- to C-terminus: Uridylate kinase (228 aa).

9-10 (GS) lines the ATP pocket. Glycine 44 contributes to the UMP binding site. Positions 45 and 49 each coordinate ATP. Residues aspartate 66 and 114–120 (IVAAQTT) each bind UMP. Positions 140, 146, and 149 each coordinate ATP.

This sequence belongs to the UMP kinase family. Homohexamer.

The protein localises to the cytoplasm. The catalysed reaction is UMP + ATP = UDP + ADP. Its pathway is pyrimidine metabolism; CTP biosynthesis via de novo pathway; UDP from UMP (UMPK route): step 1/1. Its activity is regulated as follows. Inhibited by UTP. Catalyzes the reversible phosphorylation of UMP to UDP. This chain is Uridylate kinase, found in Haloarcula marismortui (strain ATCC 43049 / DSM 3752 / JCM 8966 / VKM B-1809) (Halobacterium marismortui).